A 51-amino-acid chain; its full sequence is Insulin (51 aa).

3 disulfide bridges follow: C8–C37, C20–C50, and C36–C41.

Belongs to the insulin family. As to quaternary structure, heterodimer of a B chain and an A chain linked by two disulfide bonds.

Its subcellular location is the secreted. In terms of biological role, insulin decreases blood glucose concentration. It increases cell permeability to monosaccharides, amino acids and fatty acids. It accelerates glycolysis, the pentose phosphate cycle, and glycogen synthesis in liver. The sequence is that of Insulin from Seriola quinqueradiata (Five-ray yellowtail).